The primary structure comprises 619 residues: Putative transcription activator BRLF1 homolog (619 aa).

Disordered stretches follow at residues 301-389 (LRDS…ETQS) and 563-603 (GLVS…SDEM). 2 stretches are compositionally biased toward low complexity: residues 371–389 (EAPQ…ETQS) and 567–582 (QQQA…GGPP). The segment covering 589–598 (QEQQQSSTDP) has biased composition (polar residues).

The protein belongs to the herpesviridae TAF50 family.

Its function is as follows. Transcription activation. The protein is Putative transcription activator BRLF1 homolog (50) of Connochaetes taurinus (Blue wildebeest).